A 237-amino-acid polypeptide reads, in one-letter code: MSVHIGAQEGQIAETVLLPGDPLRAKYIAETFLEDVELYNEVRGMYGFTGTYKGKRISVQGTGMGVPSMSIYVNELIMSYGAKNLIRVGTAGGIQEDVKVRDVVIAMSASSEMGQNRVRFNGMDYAPTATFDLLHRAYMNAEKAGIPVKVGQIFTADQFYQDDFHHFKKWADFGCLAIEMEAAGLYTLAAKHKVNALTILTISDHLLTGEETTSEERQSTFDEMIRVALDTAVEVTN.

His-4 lines the a purine D-ribonucleoside pocket. Phosphate contacts are provided by residues Gly-20, Arg-24, Arg-43, and 87–90 (RVGT). Residues 179–181 (EME) and 203–204 (SD) each bind a purine D-ribonucleoside. Residue Asp-204 is the Proton donor of the active site.

The protein belongs to the PNP/UDP phosphorylase family. Homohexamer; trimer of homodimers.

The enzyme catalyses a purine D-ribonucleoside + phosphate = a purine nucleobase + alpha-D-ribose 1-phosphate. It carries out the reaction a purine 2'-deoxy-D-ribonucleoside + phosphate = a purine nucleobase + 2-deoxy-alpha-D-ribose 1-phosphate. Its function is as follows. Catalyzes the reversible phosphorolytic breakdown of the N-glycosidic bond in the beta-(deoxy)ribonucleoside molecules, with the formation of the corresponding free purine bases and pentose-1-phosphate. The polypeptide is Purine nucleoside phosphorylase DeoD-type (Exiguobacterium sp. (strain ATCC BAA-1283 / AT1b)).